An 835-amino-acid chain; its full sequence is Ion-translocating oxidoreductase complex subunit C (835 aa).

2 consecutive 4Fe-4S ferredoxin-type domains span residues 368–397 (YAPPAPEQSCIRCSACSDACPVSLMPQQLY) and 407–436 (KSEEYALKDCIECGLCAYVCPSHIPLIQYF). C377, C380, C383, C387, C416, C419, C422, and C426 together coordinate [4Fe-4S] cluster. Over residues 468 to 489 (AREEQERKARAQKAMEARRQEM) the composition is skewed to basic and acidic residues. 7 disordered regions span residues 468–492 (AREEQERKARAQKAMEARRQEMKTA), 540–574 (QRKARRLARQQQTQNTDVSQVETNEENKSTDSKSA), 586–618 (KAAQQGSALEKDEISSSDTLSVGNDTEPVAEDP), 634–666 (KAAQQGSAVEKDEISSSNTLSVGNDTEPVADDP), 682–714 (KAAQQGSAVEQDEISSSDTLSIGNEAEPVADDP), 730–762 (KAAQQRSAVEQDEISSSDTLSVGNETESVAEDP), and 778–811 (KAAQQRSAVEQDEISSSDTLSVGNETESVAEDPR). Positions 552–561 (TQNTDVSQVE) are enriched in polar residues. Over residues 648–657 (SSSNTLSVGN) the composition is skewed to polar residues. 2 stretches are compositionally biased toward polar residues: residues 745–756 (SSDTLSVGNETE) and 793–804 (SSDTLSVGNETE).

The protein belongs to the 4Fe4S bacterial-type ferredoxin family. RnfC subfamily. As to quaternary structure, the complex is composed of six subunits: RnfA, RnfB, RnfC, RnfD, RnfE and RnfG. Requires [4Fe-4S] cluster as cofactor.

It localises to the cell inner membrane. Functionally, part of a membrane-bound complex that couples electron transfer with translocation of ions across the membrane. The chain is Ion-translocating oxidoreductase complex subunit C from Pasteurella multocida (strain Pm70).